Reading from the N-terminus, the 255-residue chain is uncharacterized protein (255 aa).

Belongs to the methyltransferase superfamily.

This is an uncharacterized protein from Mycolicibacterium vanbaalenii (strain DSM 7251 / JCM 13017 / BCRC 16820 / KCTC 9966 / NRRL B-24157 / PYR-1) (Mycobacterium vanbaalenii).